The following is a 134-amino-acid chain: Endoribonuclease YbeY (134 aa).

3 residues coordinate Zn(2+): H94, H98, and H104.

This sequence belongs to the endoribonuclease YbeY family. Requires Zn(2+) as cofactor.

The protein localises to the cytoplasm. Its function is as follows. Single strand-specific metallo-endoribonuclease involved in late-stage 70S ribosome quality control and in maturation of the 3' terminus of the 16S rRNA. This is Endoribonuclease YbeY from Campylobacter fetus subsp. fetus (strain 82-40).